A 321-amino-acid chain; its full sequence is Olfactory receptor 51V1 (321 aa).

Residues 1 to 34 (MFLSSRMITSVSPSTSTNSSFLLTGFSGMEQQYP) lie on the Extracellular side of the membrane. An N-linked (GlcNAc...) asparagine glycan is attached at asparagine 18. A helical transmembrane segment spans residues 35–55 (WLSIPFSSIYAMVLLGNCMVL). Over 56–63 (HVIWTEPS) the chain is Cytoplasmic. A helical membrane pass occupies residues 64–84 (LHQPMFYFLSMLALTDLCMGL). The Extracellular segment spans residues 85 to 108 (STVYTVLGILWGIIREISLDSCIA). Cysteine 106 and cysteine 188 are oxidised to a cystine. The chain crosses the membrane as a helical span at residues 109–129 (QSYFIHGLSFMESSVLLTMAF). Residues 130–148 (DRYIAICNPLRYSSILTNS) lie on the Cytoplasmic side of the membrane. A helical membrane pass occupies residues 149–169 (RIIKIGLTIIGRSFFFITPPI). The Extracellular portion of the chain corresponds to 170-205 (ICLKFFNYCHFHILSHSFCLHQDLLRLACSDIRFNS). The helical transmembrane segment at 206–226 (YYALMLVICILLLDAILILFS) threads the bilayer. Topologically, residues 227 to 246 (YILILKSVLAVASQEERHKL) are cytoplasmic. The chain crosses the membrane as a helical span at residues 247-267 (FQTCISHICAVLVFYIPIISL). The Extracellular segment spans residues 268-282 (TMVHRFGKHLSPVAH). The helical transmembrane segment at 283–303 (VLIGNIYILFPPLMNPIIYSV) threads the bilayer. Topologically, residues 304-321 (KTQQIHTRMLRLFSLKRY) are cytoplasmic.

This sequence belongs to the G-protein coupled receptor 1 family.

It localises to the cell membrane. Its function is as follows. Odorant receptor. The chain is Olfactory receptor 51V1 (OR51V1) from Homo sapiens (Human).